We begin with the raw amino-acid sequence, 107 residues long: Putative double-stranded DNA mimic protein HSM_1473 (107 aa).

This sequence belongs to the putative dsDNA mimic protein family.

In terms of biological role, may act as a double-stranded DNA (dsDNA) mimic. Probably regulates the activity of a dsDNA-binding protein. The sequence is that of Putative double-stranded DNA mimic protein HSM_1473 from Histophilus somni (strain 2336) (Haemophilus somnus).